The primary structure comprises 179 residues: Cell division protein SepF (179 aa).

The tract at residues 19–55 (DSSLPYEKRDEPVFTSVNSSQEPALPMNQPSQSAGAK) is disordered. A compositionally biased stretch (polar residues) spans 33 to 55 (TSVNSSQEPALPMNQPSQSAGAK).

Belongs to the SepF family. As to quaternary structure, homodimer. Interacts with FtsZ.

It localises to the cytoplasm. Its function is as follows. Cell division protein that is part of the divisome complex and is recruited early to the Z-ring. Probably stimulates Z-ring formation, perhaps through the cross-linking of FtsZ protofilaments. Its function overlaps with FtsA. This Streptococcus pneumoniae (strain JJA) protein is Cell division protein SepF.